Consider the following 398-residue polypeptide: Cation channel sperm-associated protein 3 (398 aa).

The Cytoplasmic portion of the chain corresponds to 1–48 (MSQHRHQRHSRVISSSPVDTTSVGFCPTFKKFKRNDDECRAFVKRVIM). The chain crosses the membrane as a helical span at residues 49 to 71 (SRFFKIIMISTVTSNAFFMALWT). The Extracellular portion of the chain corresponds to 72-80 (SYDIRYRLF). A helical transmembrane segment spans residues 81–107 (RLLEFSEIFFVSICTSELSMKVYVDPI). A topological domain (cytoplasmic) is located at residue asparagine 108. A helical transmembrane segment spans residues 109-131 (YWKNGYNLLDVIIIIVMFLPYAL). The Extracellular portion of the chain corresponds to 132–143 (RQLMGKQFTYLY). A helical membrane pass occupies residues 144-160 (IADGMQSLRILKLIGYS). At 161–168 (QGIRTLIT) the chain is on the cytoplasmic side. A helical membrane pass occupies residues 169-195 (AVGQTVYTVASVLLLLFLLMYIFAILG). At 196 to 216 (FCLFGSPDNGDHDNWGNLAAA) the chain is on the extracellular side. The helical; Pore-forming intramembrane region spans 217–236 (FFTLFSLATVDGWTDLQKQL). The Extracellular segment spans residues 237–242 (DNREFA). Residues 243-268 (LSRAFTIIFILLASFIFLNMFVGVMI) form a helical membrane-spanning segment. At 269–398 (MHTEDSIRKF…PQSLEKVDEK (130 aa)) the chain is on the cytoplasmic side.

The protein belongs to the cation channel sperm-associated (TC 1.A.1.19) family. As to quaternary structure, component of the CatSper complex or CatSpermasome composed of the core pore-forming members CATSPER1, CATSPER2, CATSPER3 and CATSPER4 as well as auxiliary members CATSPERB, CATSPERG, CATSPERD, CATSPERE, CATSPERZ, C2CD6/CATSPERT, TMEM249, TMEM262 and EFCAB9. HSPA1 may be an additional auxiliary complex member. The core complex members CATSPER1, CATSPER2, CATSPER3 and CATSPER4 form a heterotetrameric channel. The auxiliary CATSPERB, CATSPERG, CATSPERD and CATSPERE subunits form a pavilion-like structure over the pore which stabilizes the complex through interactions with CATSPER4, CATSPER3, CATSPER1 and CATSPER2 respectively. TMEM262/CATSPERH interacts with CATSPERB, further stabilizing the complex. C2CD6/CATSPERT interacts at least with CATSPERD and is required for targeting the CatSper complex in the flagellar membrane. In terms of tissue distribution, testis-specific.

The protein localises to the cell projection. It localises to the cilium. The protein resides in the flagellum membrane. It carries out the reaction Ca(2+)(in) = Ca(2+)(out). With respect to regulation, the CatSper calcium channel is indirectly activated by extracellular progesterone and prostaglandins following the sequence: progesterone &gt; PGF1-alpha = PGE1 &gt; PGA1 &gt; PGE2 &gt;&gt; PGD2. The CatSper calcium channel is directly inhibited by endocannabinoid 2-arachidonoylglycerol (2AG). Indirect activation by progesterone takes place via the following mechanism: progesterone binds and activates the acylglycerol lipase ABHD2, which in turn mediates hydrolysis of 2AG inhibitor, relieving inhibition of the CatSper channel. The primary effect of progesterone activation is to shift voltage dependence towards more physiological, negative membrane potentials; it is not mediated by metabotropic receptors and second messengers. Sperm capacitation enhances the effect of progesterone by providing additional negative shift. Also activated by the elevation of intracellular pH. Pore-forming subunit of the CatSper complex, a sperm-specific voltage-gated calcium channel that plays a central role in calcium-dependent physiological responses essential for successful fertilization, such as sperm hyperactivation, acrosome reaction and chemotaxis towards the oocyte. The sequence is that of Cation channel sperm-associated protein 3 (CATSPER3) from Homo sapiens (Human).